A 507-amino-acid chain; its full sequence is Anaerobic nitric oxide reductase transcription regulator NorR (507 aa).

Asp-57 is subject to 4-aspartylphosphate. The Sigma-54 factor interaction domain occupies 188–417 (IIGLSSVMQQ…LEHSIYRAAI (230 aa)). ATP contacts are provided by residues 216–223 (GETGVGKE) and 279–288 (ADNGTLFLDE). Positions 483 to 502 (WAATARKLELDSGNLHRLAK) form a DNA-binding region, H-T-H motif.

The protein operates within nitrogen metabolism; nitric oxide reduction. Its function is as follows. Required for the expression of anaerobic nitric oxide (NO) reductase, acts as a transcriptional activator for at least the norVW operon. Activation also requires sigma-54. This is Anaerobic nitric oxide reductase transcription regulator NorR from Serratia proteamaculans (strain 568).